Consider the following 183-residue polypeptide: Mitochondrial inner membrane protease subunit 2 (183 aa).

A helical membrane pass occupies residues 13–35 (AFVSGFFVAVPVTVTVLDRLAYV). Catalysis depends on residues Ser42 and Lys90. Positions 161–183 (SVPPDRRPLLNWDRAAEDKYDDD) are disordered. Over residues 164–183 (PDRRPLLNWDRAAEDKYDDD) the composition is skewed to basic and acidic residues.

The protein belongs to the peptidase S26 family. IMP2 subfamily. Heterodimer of 2 subunits, IMMPL1 and IMMPL2.

It is found in the mitochondrion inner membrane. Catalyzes the removal of transit peptides required for the targeting of proteins from the mitochondrial matrix, across the inner membrane, into the inter-membrane space. The chain is Mitochondrial inner membrane protease subunit 2 (immp2l) from Danio rerio (Zebrafish).